The primary structure comprises 183 residues: Der GTPase-activating protein YihI (183 aa).

Residues 1 to 18 show a composition bias toward low complexity; it reads MNQPSKAPRAPRSSAATP. Residues 1–114 are disordered; the sequence is MNQPSKAPRA…EEELAKLEND (114 aa). Over residues 25-34 the composition is skewed to basic and acidic residues; sequence RAELDQEARE. Low complexity predominate over residues 56-65; that stretch reads NQKNKAAAQA. Residues 92 to 114 show a composition bias toward basic and acidic residues; that stretch reads PKAEAKPKPRLTPEEELAKLEND.

This sequence belongs to the YihI family. As to quaternary structure, interacts with Der.

Its function is as follows. A GTPase-activating protein (GAP) that modifies Der/EngA GTPase function. May play a role in ribosome biogenesis. The sequence is that of Der GTPase-activating protein YihI from Serratia proteamaculans (strain 568).